Consider the following 340-residue polypeptide: Photosystem II protein D1 (340 aa).

A run of 3 helical transmembrane segments spans residues 25-42 (YIGWFGLLVFPLLSLATV), 114-129 (HFFLGVCGWMGREWEF), and 138-152 (WIFVAFSAPIAAAAA). H114 provides a ligand contact to chlorophyll a. Pheophytin a is bound at residue W122. [CaMn4O5] cluster is bound by residues D166 and E185. A helical membrane pass occupies residues 193–214 (FHILGVAGVFGGSLFSAMHGSL). H194 is a chlorophyll a binding site. A quinone contacts are provided by residues H211 and 260–261 (SF). H211 is a binding site for Fe cation. Residue H268 coordinates Fe cation. The helical transmembrane segment at 270 to 284 (FLAAWPVIGIWFTSL) threads the bilayer. [CaMn4O5] cluster is bound by residues H328, E329, D338, and A340.

Belongs to the reaction center PufL/M/PsbA/D family. In terms of assembly, PSII is composed of 1 copy each of membrane proteins PsbA, PsbB, PsbC, PsbD, PsbE, PsbF, PsbH, PsbI, PsbJ, PsbK, PsbL, PsbM, PsbT, PsbX, PsbY, PsbZ, Psb30/Ycf12, at least 3 peripheral proteins of the oxygen-evolving complex and a large number of cofactors. It forms dimeric complexes. It depends on The D1/D2 heterodimer binds P680, chlorophylls that are the primary electron donor of PSII, and subsequent electron acceptors. It shares a non-heme iron and each subunit binds pheophytin, quinone, additional chlorophylls, carotenoids and lipids. D1 provides most of the ligands for the Mn4-Ca-O5 cluster of the oxygen-evolving complex (OEC). There is also a Cl(-1) ion associated with D1 and D2, which is required for oxygen evolution. The PSII complex binds additional chlorophylls, carotenoids and specific lipids. as a cofactor. Tyr-157 forms a radical intermediate that is referred to as redox-active TyrZ, YZ or Y-Z.

The protein localises to the plastid. Its subcellular location is the chloroplast thylakoid membrane. It catalyses the reaction 2 a plastoquinone + 4 hnu + 2 H2O = 2 a plastoquinol + O2. In terms of biological role, photosystem II (PSII) is a light-driven water:plastoquinone oxidoreductase that uses light energy to abstract electrons from H(2)O, generating O(2) and a proton gradient subsequently used for ATP formation. It consists of a core antenna complex that captures photons, and an electron transfer chain that converts photonic excitation into a charge separation. The D1/D2 (PsbA/PsbD) reaction center heterodimer binds P680, the primary electron donor of PSII as well as several subsequent electron acceptors. This Amphidinium operculatum (Dinoflagellate) protein is Photosystem II protein D1.